The sequence spans 734 residues: PI-PLC X-box domain-containing protein DDB_G0293730 (734 aa).

Residues 8–70 are a coiled coil; it reads IKNILLKIEK…ELNEKLIVEK (63 aa). The region spanning 440-604 is the PI-PLC X-box domain; it reads KLKDRKVRNL…CIYDDLVNPL (165 aa).

This Dictyostelium discoideum (Social amoeba) protein is PI-PLC X-box domain-containing protein DDB_G0293730.